We begin with the raw amino-acid sequence, 552 residues long: Glucose-6-phosphate isomerase (552 aa).

Glu-359 serves as the catalytic Proton donor. Residues His-390 and Lys-514 contribute to the active site.

It belongs to the GPI family.

The protein localises to the cytoplasm. It catalyses the reaction alpha-D-glucose 6-phosphate = beta-D-fructose 6-phosphate. The protein operates within carbohydrate biosynthesis; gluconeogenesis. Its pathway is carbohydrate degradation; glycolysis; D-glyceraldehyde 3-phosphate and glycerone phosphate from D-glucose: step 2/4. Catalyzes the reversible isomerization of glucose-6-phosphate to fructose-6-phosphate. This is Glucose-6-phosphate isomerase from Streptomyces griseus subsp. griseus (strain JCM 4626 / CBS 651.72 / NBRC 13350 / KCC S-0626 / ISP 5235).